The following is a 245-amino-acid chain: Nisin immunity protein (245 aa).

Residues 1–19 (MRRYLILIVALIGITGLSG) form the signal peptide. Cys20 is lipidated: N-palmitoyl cysteine. Cys20 carries the S-diacylglycerol cysteine lipid modification.

It is found in the cell membrane. Its function is as follows. Involved in immunity against exogenously supplied nisin. This chain is Nisin immunity protein (nisI), found in Lactococcus lactis subsp. lactis (Streptococcus lactis).